A 201-amino-acid polypeptide reads, in one-letter code: Heat shock protein beta-1 (201 aa).

Arg12 carries the post-translational modification Omega-N-methylarginine. Ser15 carries the phosphoserine; by MAPKAPK2 and MAPKAPK3 modification. The residue at position 27 (Ser27) is a Phosphoserine. Residues Ala68–Lys201 form an interaction with TGFB1I1 region. One can recognise a sHSP domain in the interval Ala72–Thr180. Phosphoserine; by MAPKAPK2, MAPKAPK3 and MAPKAPK5 is present on residues Ser74 and Ser78. Ser79, Ser82, and Ser94 each carry phosphoserine. At Lys119 the chain carries N6-acetyllysine. Thr170 is subject to Phosphothreonine. Residues Ser172 and Ser195 each carry the phosphoserine modification.

It belongs to the small heat shock protein (HSP20) family. In terms of assembly, homooligomer. Homodimer; becomes monomeric upon activation. Heterooligomer; with HSPB6. Associates with alpha- and beta-tubulin. Interacts with TGFB1I1. Interacts with CRYAB. Interacts with HSPB8. Interacts with HSPBAP1. Phosphorylated upon exposure to protein kinase C activators and heat shock. Phosphorylation by MAPKAPK2 and MAPKAPK3 in response to stress dissociates HSPB1 from large small heat-shock protein (sHsps) oligomers and impairs its chaperone activity and ability to protect against oxidative stress effectively. Phosphorylation by MAPKAPK5 in response to PKA stimulation induces F-actin rearrangement.

The protein localises to the cytoplasm. Its subcellular location is the nucleus. The protein resides in the cytoskeleton. It is found in the spindle. Functionally, small heat shock protein which functions as a molecular chaperone probably maintaining denatured proteins in a folding-competent state. Plays a role in stress resistance and actin organization. Through its molecular chaperone activity may regulate numerous biological processes including the phosphorylation and the axonal transport of neurofilament proteins. The protein is Heat shock protein beta-1 (HSPB1) of Bos taurus (Bovine).